The chain runs to 295 residues: Excinuclease cho (295 aa).

Residues Thr-33–Lys-108 enclose the GIY-YIG domain.

Its function is as follows. Incises the DNA at the 3' side of a lesion during nucleotide excision repair. Incises the DNA farther away from the lesion than UvrC. Not able to incise the 5' site of a lesion. In vitro, the incision activity of Cho is UvrA and UvrB dependent. When a lesion remains because UvrC is not able to induce the 3' incision, Cho incises the DNA. Then UvrC makes the 5' incision. The combined action of Cho and UvrC broadens the substrate range of nucleotide excision repair. This Escherichia coli (strain K12) protein is Excinuclease cho (cho).